A 295-amino-acid polypeptide reads, in one-letter code: Acetylglutamate kinase (295 aa).

Substrate is bound by residues 66–67 (GG), Arg88, and Asn193.

It belongs to the acetylglutamate kinase family. ArgB subfamily.

Its subcellular location is the cytoplasm. It carries out the reaction N-acetyl-L-glutamate + ATP = N-acetyl-L-glutamyl 5-phosphate + ADP. The protein operates within amino-acid biosynthesis; L-arginine biosynthesis; N(2)-acetyl-L-ornithine from L-glutamate: step 2/4. Catalyzes the ATP-dependent phosphorylation of N-acetyl-L-glutamate. The sequence is that of Acetylglutamate kinase from Rhizobium etli (strain CIAT 652).